Reading from the N-terminus, the 453-residue chain is tRNA hydroxylation protein P (453 aa).

This sequence belongs to the peptidase U32 family.

In terms of biological role, involved in prephenate-dependent formation of 5-hydroxyuridine (ho5U) modification at position 34 in tRNAs, the first step in 5-carboxymethoxyuridine (cmo5U) biosynthesis. Involved differently in ho5U formation in each tRNA; tRNA(Leu3) and tRNA(Pro3) are major targets of TrhP. The sequence is that of tRNA hydroxylation protein P from Escherichia coli (strain K12).